The primary structure comprises 177 residues: Large ribosomal subunit protein uL6 (177 aa).

This sequence belongs to the universal ribosomal protein uL6 family. In terms of assembly, part of the 50S ribosomal subunit.

This protein binds to the 23S rRNA, and is important in its secondary structure. It is located near the subunit interface in the base of the L7/L12 stalk, and near the tRNA binding site of the peptidyltransferase center. The sequence is that of Large ribosomal subunit protein uL6 from Methylibium petroleiphilum (strain ATCC BAA-1232 / LMG 22953 / PM1).